We begin with the raw amino-acid sequence, 341 residues long: Anthranilate phosphoribosyltransferase (341 aa).

5-phospho-alpha-D-ribose 1-diphosphate-binding positions include Gly79, 82 to 83, Thr87, 89 to 92, 107 to 115, and Ala119; these read GD, NIST, and KHGNRAASS. Gly79 contacts anthranilate. Ser91 is a binding site for Mg(2+). Asn110 is an anthranilate binding site. Arg165 lines the anthranilate pocket. Residues Asp224 and Glu225 each contribute to the Mg(2+) site.

The protein belongs to the anthranilate phosphoribosyltransferase family. Homodimer. Requires Mg(2+) as cofactor.

The enzyme catalyses N-(5-phospho-beta-D-ribosyl)anthranilate + diphosphate = 5-phospho-alpha-D-ribose 1-diphosphate + anthranilate. Its pathway is amino-acid biosynthesis; L-tryptophan biosynthesis; L-tryptophan from chorismate: step 2/5. Functionally, catalyzes the transfer of the phosphoribosyl group of 5-phosphorylribose-1-pyrophosphate (PRPP) to anthranilate to yield N-(5'-phosphoribosyl)-anthranilate (PRA). The protein is Anthranilate phosphoribosyltransferase of Lacticaseibacillus casei (strain BL23) (Lactobacillus casei).